Reading from the N-terminus, the 748-residue chain is Pentatricopeptide repeat-containing protein At3g13880 (748 aa).

PPR repeat units lie at residues 46-80 (DSEG…SLNP), 81-111 (CLYL…MPER), 112-146 (NIIS…NLKL), 147-181 (DKFT…GLSQ), 182-212 (QVFL…CDER), 213-247 (DQVS…GLNL), 248-285 (TTYA…GMEF), 286-316 (DIVV…MPSK), 317-356 (NVVT…GLEP), 357-391 (SPST…NFQS), 392-422 (DEFI…TSKQ), 423-457 (DIAS…HIRP), 458-492 (EEYT…GIDA), 493-523 (FTSV…VQNP), 524-558 (DVAT…GIKP), 559-589 (NQQA…MKND), and 595-629 (NEKH…DHPV). The segment at 630-705 (TWRALLSSCR…EPALSWIVIG (76 aa)) is type E motif. Residues 706–736 (NQTHSFAVADLSHPSSQMIYTMLETMDNVDF) are type E(+) motif.

The protein belongs to the PPR family. PCMP-E subfamily.

In Arabidopsis thaliana (Mouse-ear cress), this protein is Pentatricopeptide repeat-containing protein At3g13880 (PCMP-E89).